The sequence spans 310 residues: Protoheme IX farnesyltransferase 2 (310 aa).

9 consecutive transmembrane segments (helical) span residues 25-45 (PGII…AAKG), 49-69 (LVLM…GCAI), 87-107 (RVTV…LALG), 120-139 (ALAL…VYSL), 145-165 (SVYG…VGYC), 176-196 (AILL…IAIF), 220-240 (LHIV…PLAG), 242-262 (TGIA…AMAL), and 277-297 (QVFG…ALDF).

The protein belongs to the UbiA prenyltransferase family. Protoheme IX farnesyltransferase subfamily.

Its subcellular location is the cell inner membrane. It catalyses the reaction heme b + (2E,6E)-farnesyl diphosphate + H2O = Fe(II)-heme o + diphosphate. Its pathway is porphyrin-containing compound metabolism; heme O biosynthesis; heme O from protoheme: step 1/1. In terms of biological role, converts heme B (protoheme IX) to heme O by substitution of the vinyl group on carbon 2 of heme B porphyrin ring with a hydroxyethyl farnesyl side group. The chain is Protoheme IX farnesyltransferase 2 from Shewanella baltica (strain OS185).